We begin with the raw amino-acid sequence, 338 residues long: Solute carrier family 35 member B1 homolog (338 aa).

The next 9 membrane-spanning stretches (helical) occupy residues 9-29 (FVIY…VQEK), 53-73 (LALV…LLTI), 84-104 (GSYV…NMAM), 111-131 (TAVV…VLIG), 135-155 (YSWT…LFMY), 168-188 (TLLG…TGAV), 213-233 (LMLG…YFTI), 244-264 (LIAV…ASFG), and 284-304 (VLLF…LVFA). The Di-lysine motif signature appears at 334-338 (KKLNS).

It belongs to the nucleotide-sugar transporter family. SLC35B subfamily.

The protein resides in the endoplasmic reticulum membrane. Probable sugar transporter. In Drosophila melanogaster (Fruit fly), this protein is Solute carrier family 35 member B1 homolog (meigo).